A 107-amino-acid polypeptide reads, in one-letter code: L-rhamnose mutarotase (107 aa).

A substrate-binding site is contributed by tyrosine 21. Residue histidine 25 is the Proton donor of the active site. Residues tyrosine 44 and 79–80 each bind substrate; that span reads WW. Residues 88–107 are disordered; sequence ETNPDNSPKTNSLKEVFHLD. Over residues 90-100 the composition is skewed to polar residues; sequence NPDNSPKTNSL.

It belongs to the rhamnose mutarotase family. Homodimer.

The protein localises to the cytoplasm. The enzyme catalyses alpha-L-rhamnose = beta-L-rhamnose. The protein operates within carbohydrate metabolism; L-rhamnose metabolism. Functionally, involved in the anomeric conversion of L-rhamnose. This chain is L-rhamnose mutarotase, found in Flavobacterium johnsoniae (strain ATCC 17061 / DSM 2064 / JCM 8514 / BCRC 14874 / CCUG 350202 / NBRC 14942 / NCIMB 11054 / UW101) (Cytophaga johnsonae).